The following is a 25-amino-acid chain: Large ribosomal subunit protein uL30 (25 aa).

It belongs to the universal ribosomal protein uL30 family. In terms of assembly, part of the 50S ribosomal subunit.

The protein is Large ribosomal subunit protein uL30 (rpmD) of Pseudomonas putida (Arthrobacter siderocapsulatus).